Consider the following 878-residue polypeptide: Aconitase htyD (878 aa).

Substrate is bound by residues glutamine 173 and 290–292 (DSH). [4Fe-4S] cluster-binding residues include cysteine 472, cysteine 535, and cysteine 538. Substrate is bound by residues arginine 558 and arginine 563. The segment at 626–671 (IAIANQRTKPAPTMPAYVEPYRSFQPPVPPSSDQPQSMKDHGKTSN) is disordered. A substrate-binding site is contributed by 742-743 (SR).

It belongs to the aconitase/IPM isomerase family.

The protein operates within antifungal biosynthesis. In terms of biological role, aconitase; part of the gene cluster that mediates the de novo generation of L-homotyrosine from acetyl-CoA and 4-hydroxyphenyl-pyruvate. L-homotyrosine is a building block of echinocandin B, a fungal lipidated cyclic hexapeptide that acts as an antifungal agent. L-homotyrosine 4-hydroxyphenyl-pyruvate first undergoes an aldol-type condensation by htyA with the C-2 of acetyl-CoA followed by the release of CoA to form 2-(4-hydroxybenzyl)-malate. This is followed by isomerization of 2-(4-hydroxy-benzyl)-malate to 3-(4-hydroxybenzyl)-malate by htyD. Thereafter, 3-(4-hydroxybenzyl)-malate undergoes decarboxylation and oxidation to form 2-oxo-4-(4-hydroxybenzyl)butanoic acid, coupled to reduction of NAD(+) to NADH by htyC. The product then undergoes transamination catalyzed by htyB to form L-homotyrosine. The chain is Aconitase htyD from Aspergillus rugulosus (Emericella rugulosa).